The chain runs to 180 residues: MSESELQLVARRIRSFPDFPIPGVLFRDISPLLKDPDSFRASIRLLAGHLKSTHGGKIDYIAGLDSRGFLFGPSLAQELGVGCVLIRKRGKLPGPTVSASYSLEYGKAELEIQKDALEPGQKVVIVDDLLATGGTMCAACELLSQLRAEVVECVSLVELTSLKGREKLGPVPFFSLLQYE.

Residue S2 is modified to N-acetylserine. Phosphoserine is present on residues S4, S15, and S30. Position 60 is a phosphotyrosine (Y60). S66 carries the phosphoserine modification. Residue K114 is modified to N6-acetyllysine. Residue T135 is modified to Phosphothreonine.

It belongs to the purine/pyrimidine phosphoribosyltransferase family. Homodimer.

Its subcellular location is the cytoplasm. The catalysed reaction is AMP + diphosphate = 5-phospho-alpha-D-ribose 1-diphosphate + adenine. It functions in the pathway purine metabolism; AMP biosynthesis via salvage pathway; AMP from adenine: step 1/1. Functionally, catalyzes a salvage reaction resulting in the formation of AMP, that is energically less costly than de novo synthesis. This Rattus norvegicus (Rat) protein is Adenine phosphoribosyltransferase.